A 341-amino-acid chain; its full sequence is uncharacterized protein (341 aa).

It belongs to the cycloisomerase 2 family.

This is an uncharacterized protein from Lactococcus lactis subsp. lactis (strain IL1403) (Streptococcus lactis).